A 188-amino-acid polypeptide reads, in one-letter code: dCTP deaminase (188 aa).

DCTP-binding positions include 111–116 (KSTYAR), 135–137 (TLE), glutamine 156, tyrosine 170, and glutamine 180. Glutamate 137 acts as the Proton donor/acceptor in catalysis.

This sequence belongs to the dCTP deaminase family. As to quaternary structure, homotrimer.

The catalysed reaction is dCTP + H2O + H(+) = dUTP + NH4(+). Its pathway is pyrimidine metabolism; dUMP biosynthesis; dUMP from dCTP (dUTP route): step 1/2. Functionally, catalyzes the deamination of dCTP to dUTP. The polypeptide is dCTP deaminase (Thiobacillus denitrificans (strain ATCC 25259 / T1)).